A 139-amino-acid chain; its full sequence is Small ribosomal subunit protein uS12 (139 aa).

The tract at residues A118 to S139 is disordered. Residues Y130–S139 show a composition bias toward basic residues.

The protein belongs to the universal ribosomal protein uS12 family. Part of the 30S ribosomal subunit. Contacts proteins S8 and S17. May interact with IF1 in the 30S initiation complex.

In terms of biological role, with S4 and S5 plays an important role in translational accuracy. Interacts with and stabilizes bases of the 16S rRNA that are involved in tRNA selection in the A site and with the mRNA backbone. Located at the interface of the 30S and 50S subunits, it traverses the body of the 30S subunit contacting proteins on the other side and probably holding the rRNA structure together. The combined cluster of proteins S8, S12 and S17 appears to hold together the shoulder and platform of the 30S subunit. The protein is Small ribosomal subunit protein uS12 of Mycoplasma mobile (strain ATCC 43663 / 163K / NCTC 11711) (Mesomycoplasma mobile).